Consider the following 205-residue polypeptide: GTP cyclohydrolase-2 (205 aa).

49–53 (RIHSE) is a binding site for GTP. Residues Cys54, Cys65, and Cys67 each coordinate Zn(2+). Residues Gln70, 92-94 (EGR), and Thr114 each bind GTP. Catalysis depends on Asp126, which acts as the Proton acceptor. The Nucleophile role is filled by Arg128. The GTP site is built by Thr149 and Lys154.

The protein belongs to the GTP cyclohydrolase II family. Requires Zn(2+) as cofactor.

The enzyme catalyses GTP + 4 H2O = 2,5-diamino-6-hydroxy-4-(5-phosphoribosylamino)-pyrimidine + formate + 2 phosphate + 3 H(+). The protein operates within cofactor biosynthesis; riboflavin biosynthesis; 5-amino-6-(D-ribitylamino)uracil from GTP: step 1/4. Functionally, catalyzes the conversion of GTP to 2,5-diamino-6-ribosylamino-4(3H)-pyrimidinone 5'-phosphate (DARP), formate and pyrophosphate. The protein is GTP cyclohydrolase-2 of Shewanella denitrificans (strain OS217 / ATCC BAA-1090 / DSM 15013).